The sequence spans 175 residues: Gamma-crystallin B (175 aa).

2 consecutive Beta/gamma crystallin 'Greek key' domains span residues 2–40 (GKITFFEDRGFQGRCYECSSDCPNLQTYFSRCNSVRVDS) and 41–83 (GCWM…RLIP). The connecting peptide stretch occupies residues 84–88 (QHSGT). Beta/gamma crystallin 'Greek key' domains follow at residues 89-129 (YRMR…NVME) and 130-172 (GCWV…RRVM).

It belongs to the beta/gamma-crystallin family.

Functionally, crystallins are the dominant structural components of the vertebrate eye lens. This is Gamma-crystallin B (Crygb) from Rattus norvegicus (Rat).